Reading from the N-terminus, the 286-residue chain is Shikimate dehydrogenase (NADP(+)) (286 aa).

Shikimate-binding positions include 20 to 22 and S67; that span reads SLS. K71 (proton acceptor) is an active-site residue. The shikimate site is built by N92 and D107. Residues 131–135 and A230 contribute to the NADP(+) site; that span reads GGGGA. Position 232 (Y232) interacts with shikimate. G253 contacts NADP(+).

This sequence belongs to the shikimate dehydrogenase family. Homodimer.

It catalyses the reaction shikimate + NADP(+) = 3-dehydroshikimate + NADPH + H(+). It participates in metabolic intermediate biosynthesis; chorismate biosynthesis; chorismate from D-erythrose 4-phosphate and phosphoenolpyruvate: step 4/7. Its function is as follows. Involved in the biosynthesis of the chorismate, which leads to the biosynthesis of aromatic amino acids. Catalyzes the reversible NADPH linked reduction of 3-dehydroshikimate (DHSA) to yield shikimate (SA). In Lactococcus lactis subsp. lactis (strain IL1403) (Streptococcus lactis), this protein is Shikimate dehydrogenase (NADP(+)).